Reading from the N-terminus, the 151-residue chain is MTGLERQLTEMLDAPVAASGYELVGLEFIRAGEHSTLRIYIDSPNGINVDDCSEVSHQVSAVMDVEDPISVAYNLEVSSPGLERPLFKAEHYQQFIGHEVSIVLKMAVGNRRKWKGDIQSIEGETVKVLVEGQEEEFVLSNIAKANLIPKF.

Belongs to the RimP family.

It is found in the cytoplasm. Functionally, required for maturation of 30S ribosomal subunits. This chain is Ribosome maturation factor RimP, found in Vibrio atlanticus (strain LGP32) (Vibrio splendidus (strain Mel32)).